A 153-amino-acid chain; its full sequence is 3-hydroxyacyl-[acyl-carrier-protein] dehydratase FabZ (153 aa).

H57 is a catalytic residue.

Belongs to the thioester dehydratase family. FabZ subfamily.

The protein localises to the cytoplasm. It carries out the reaction a (3R)-hydroxyacyl-[ACP] = a (2E)-enoyl-[ACP] + H2O. Involved in unsaturated fatty acids biosynthesis. Catalyzes the dehydration of short chain beta-hydroxyacyl-ACPs and long chain saturated and unsaturated beta-hydroxyacyl-ACPs. The chain is 3-hydroxyacyl-[acyl-carrier-protein] dehydratase FabZ from Vibrio cholerae serotype O1 (strain ATCC 39315 / El Tor Inaba N16961).